A 422-amino-acid chain; its full sequence is m7GpppN-mRNA hydrolase (422 aa).

The 132-residue stretch at 95–226 (MGVPTYGAII…KLGLAPNKFF (132 aa)) folds into the Nudix hydrolase domain. The short motif at 129-150 (GKVNKEEAPHDCAAREVFEETG) is the Nudix box element. The Mn(2+) site is built by E144 and E148. 5 positions are modified to phosphoserine: S246, S247, S249, S276, and S284. The disordered stretch occupies residues 247-347 (SDSDNGFSSA…GVHGQPAKQQ (101 aa)). A compositionally biased stretch (low complexity) spans 249-258 (SDNGFSSAGS). Residues 303–312 (NHGEVSDLLK) are compositionally biased toward basic and acidic residues.

This sequence belongs to the Nudix hydrolase family. DCP2 subfamily. Found in a mRNA decay complex with LSM1, LSM3, LSM4, EXOSC2, EXOSC4, EXOSC10, PARN, XRN1, CNOT6, UPF1, UPF2 and UPF3B. Forms a complex with DCP1A, EDC3, DDX6 and EDC4/HEDLS, within this complex directly interacts with EDC4/HEDLS. Interacts with DPC1B, UPF1, UPF2 and UPF3B. Associates with polysomes. Interacts (via N-terminus and C-terminus) with TRIM21 (via N-terminus and C-terminus). Interacts with LIMD1, WTIP and AJUBA. Interacts with DDX17 in an RNA-dependent manner. Interacts with ZC3HAV1. Interacts with APOBEC3G in an RNA-dependent manner. Interacts with ZFP36L1 (via N-terminus). Interacts with NBDY. Mn(2+) serves as cofactor. It depends on Mg(2+) as a cofactor. In terms of tissue distribution, strongly expressed in brain and testis. Weakly expressed in lung. Not detected in heart, liver, kidney and muscle (at protein level).

Its subcellular location is the cytoplasm. The protein localises to the P-body. It is found in the nucleus. It carries out the reaction a 5'-end (N(7)-methyl 5'-triphosphoguanosine)-ribonucleoside in mRNA + H2O = N(7)-methyl-GDP + a 5'-end phospho-ribonucleoside in mRNA + 2 H(+). Decapping metalloenzyme that catalyzes the cleavage of the cap structure on mRNAs. Removes the 7-methyl guanine cap structure from mRNA molecules, yielding a 5'-phosphorylated mRNA fragment and 7m-GDP. Necessary for the degradation of mRNAs, both in normal mRNA turnover and in nonsense-mediated mRNA decay. Plays a role in replication-dependent histone mRNA degradation. Has higher activity towards mRNAs that lack a poly(A) tail. Has no activity towards a cap structure lacking an RNA moiety. The presence of a N(6)-methyladenosine methylation at the second transcribed position of mRNAs (N(6),2'-O-dimethyladenosine cap; m6A(m)) provides resistance to DCP2-mediated decapping. Blocks autophagy in nutrient-rich conditions by repressing the expression of ATG-related genes through degradation of their transcripts. This chain is m7GpppN-mRNA hydrolase (Dcp2), found in Mus musculus (Mouse).